We begin with the raw amino-acid sequence, 456 residues long: tRNA-2-methylthio-N(6)-dimethylallyladenosine synthase (456 aa).

The MTTase N-terminal domain maps to 2-119 (KKVFIKTYGC…LPDLIAARRR (118 aa)). [4Fe-4S] cluster contacts are provided by C11, C48, C82, C156, C160, and C163. The Radical SAM core domain maps to 142–375 (RVDGASAYVS…QATIEENVAR (234 aa)). One can recognise a TRAM domain in the interval 378–448 (QGMVGSVQRI…PHSLRGEVAE (71 aa)).

This sequence belongs to the methylthiotransferase family. MiaB subfamily. Monomer. The cofactor is [4Fe-4S] cluster.

The protein resides in the cytoplasm. The catalysed reaction is N(6)-dimethylallyladenosine(37) in tRNA + (sulfur carrier)-SH + AH2 + 2 S-adenosyl-L-methionine = 2-methylsulfanyl-N(6)-dimethylallyladenosine(37) in tRNA + (sulfur carrier)-H + 5'-deoxyadenosine + L-methionine + A + S-adenosyl-L-homocysteine + 2 H(+). In terms of biological role, catalyzes the methylthiolation of N6-(dimethylallyl)adenosine (i(6)A), leading to the formation of 2-methylthio-N6-(dimethylallyl)adenosine (ms(2)i(6)A) at position 37 in tRNAs that read codons beginning with uridine. This chain is tRNA-2-methylthio-N(6)-dimethylallyladenosine synthase, found in Ralstonia pickettii (strain 12J).